Consider the following 592-residue polypeptide: Transcription factor MYC3 (592 aa).

Residues 82–141 (STGDNTVILGWGDGYYKGEEDKEKKKNNTNTAEQEHRKRVIRELNSLISGGIGVSDESND) form a JAZ-interaction domain region. Disordered regions lie at residues 261-313 (ENDP…VENQ), 341-361 (CGNE…NDEG), 393-422 (EPPE…AERQ), and 465-508 (QQAE…STAS). Residues 278 to 293 (SPARVNNGNNSNSNSK) are compositionally biased toward low complexity. Over residues 294-306 (SDSHQISKLEKND) the composition is skewed to basic and acidic residues. Polar residues predominate over residues 352 to 361 (VSKGSNNDEG). Positions 398–407 (KPRKRGRKPA) are enriched in basic residues. Composition is skewed to basic and acidic residues over residues 408–422 (NGRE…AERQ) and 468–482 (ESDK…DGMS). A bHLH domain is found at 411–460 (EEPLNHVEAERQRREKLNQRFYSLRAVVPNVSKMDKASLLGDAISYINEL).

In terms of assembly, homo- and heterodimer. Interacts with MYB28, MYB29, MYB34, MYB51, MYB76, MYB122, MYC2, MYC4, AFPH2/NINJA and the JAZ repressors TIFY10A/JAZ1, TIFY10B/JAZ2, TIFY6B/JAZ3, TIFY11A/JAZ5, TIFY11B/JAZ6, TIFY5B/JAZ7, TIFY5A/JAZ8, TIFY7/JAZ9, TIFY9/JAZ10, TIFY3A/JAZ11 and TIFY3B/JAZ12. In terms of tissue distribution, constitutively expressed in roots, stems, leaves, flowers, and seedlings.

The protein localises to the nucleus. Transcription factor involved in tryptophan, jasmonic acid (JA) and other stress-responsive gene regulation. With MYC2 and MYC4, controls additively subsets of JA-dependent responses. Can form complexes with all known glucosinolate-related MYBs to regulate glucosinolate biosynthesis. Binds to the G-box (5'-CACGTG-3') of promoters. Activates multiple TIFY/JAZ promoters. The protein is Transcription factor MYC3 (MYC3) of Arabidopsis thaliana (Mouse-ear cress).